The primary structure comprises 196 residues: Recombination protein RecR (196 aa).

A C4-type zinc finger spans residues 57-72 (CERCNTFTEAPVCSTC). A Toprim domain is found at 80 to 175 (RQLCVVETPA…SVTRLARGVP (96 aa)).

It belongs to the RecR family.

Its function is as follows. May play a role in DNA repair. It seems to be involved in an RecBC-independent recombinational process of DNA repair. It may act with RecF and RecO. This is Recombination protein RecR from Methylibium petroleiphilum (strain ATCC BAA-1232 / LMG 22953 / PM1).